Reading from the N-terminus, the 326-residue chain is Nicotianamine synthase 2 (326 aa).

Belongs to the nicotianamine synthase (NAS)-like family. In terms of tissue distribution, expressed in roots.

The enzyme catalyses 3 S-adenosyl-L-methionine = nicotianamine + 3 S-methyl-5'-thioadenosine + 3 H(+). Functionally, synthesizes nicotianamine, a polyamine that is the first intermediate in the synthesis of the phytosiderophores of the mugineic acid type found in gramineae which serve as a sensor for the physiological iron status within the plant, and/or might be involved in the transport of iron. This chain is Nicotianamine synthase 2 (NAS2), found in Oryza sativa subsp. japonica (Rice).